The following is a 28-amino-acid chain: Cyclotide vodo I2 (28 aa).

Intrachain disulfides connect Cys4/Cys18, Cys8/Cys20, and Cys13/Cys25.

Post-translationally, this is a cyclic peptide. Contains 3 disulfide bonds.

Functionally, probably participates in a plant defense mechanism. The protein is Cyclotide vodo I2 of Viola odorata (Sweet violet).